Reading from the N-terminus, the 624-residue chain is Atypical kinase COQ8B, mitochondrial (624 aa).

The tract at residues 90–117 is disordered; the sequence is EMPPDFSSKDGRGETSETPVGAATGTIK. The chain crosses the membrane as a helical span at residues 189-205; the sequence is LANFGGLAVGLGIGAIA. Positions 249-252 match the KxGQ motif motif; it reads KIGQ. In terms of domain architecture, Protein kinase spans 285–517; sequence MHKVLEEELG…ATVLKKSKDL (233 aa). An AAAS motif motif is present at residues 310 to 313; that stretch reads AAAS. Residues Ser-313, Lys-331, and 418–421 contribute to the ATP site; that span reads MELV. The Proton acceptor role is filled by Asp-461. Asn-466 and Asp-480 together coordinate ATP.

It belongs to the protein kinase superfamily. ADCK protein kinase family. In terms of assembly, homodimer; homodimerizes via its transmembrane region. Interacts with the multi-subunit COQ enzyme complex.

It localises to the mitochondrion membrane. The protein localises to the cytoplasm. Its subcellular location is the cytosol. It is found in the cell membrane. It functions in the pathway cofactor biosynthesis; ubiquinone biosynthesis. Its function is as follows. Atypical kinase involved in the biosynthesis of coenzyme Q, also named ubiquinone, an essential lipid-soluble electron transporter for aerobic cellular respiration. Its substrate specificity is still unclear: may act as a protein kinase that mediates phosphorylation of COQ3. According to other reports, acts as a small molecule kinase, possibly a lipid kinase that phosphorylates a prenyl lipid in the ubiquinone biosynthesis pathway, as suggested by its ability to bind coenzyme Q lipid intermediates. However, the small molecule kinase activity was not confirmed by another publication. Required for podocyte migration. The protein is Atypical kinase COQ8B, mitochondrial of Danio rerio (Zebrafish).